Reading from the N-terminus, the 118-residue chain is Transcription factor PAR1 (118 aa).

Residues 1 to 58 (MEETLATPDATRRSLSPSCSATVKSRAAGFERRTKRRLSETNASVREDREEAEEEEDE) form a disordered region. Over residues 13–23 (RSLSPSCSATV) the composition is skewed to polar residues. In terms of domain architecture, bHLH spans 43–92 (ASVREDREEAEEEEDEVKEKIEALQRIIPGGAALGVDALFEETAGYILSL).

It belongs to the bHLH protein family. As to quaternary structure, homodimer.

Its subcellular location is the nucleus. In terms of biological role, atypical bHLH transcription factor that acts as a negative regulator of a variety of shade avoidance syndrome (SAS) responses, including seedling elongation and photosynthetic pigment accumulation. Acts as a direct transcriptional repressor of two auxin-responsive genes, SAUR15 and SAUR68. May function in integrating shade and hormone transcriptional networks in response to light and auxin changes. The chain is Transcription factor PAR1 (PAR1) from Arabidopsis thaliana (Mouse-ear cress).